A 431-amino-acid chain; its full sequence is 4-hydroxy-3-methylbut-2-en-1-yl diphosphate synthase (flavodoxin) (431 aa).

The segment at 1–21 (MNKLENPSQRDVAGPSPRHKT) is disordered. [4Fe-4S] cluster contacts are provided by Cys-310, Cys-313, Cys-356, and Glu-363.

Belongs to the IspG family. Requires [4Fe-4S] cluster as cofactor.

The enzyme catalyses (2E)-4-hydroxy-3-methylbut-2-enyl diphosphate + oxidized [flavodoxin] + H2O + 2 H(+) = 2-C-methyl-D-erythritol 2,4-cyclic diphosphate + reduced [flavodoxin]. Its pathway is isoprenoid biosynthesis; isopentenyl diphosphate biosynthesis via DXP pathway; isopentenyl diphosphate from 1-deoxy-D-xylulose 5-phosphate: step 5/6. Functionally, converts 2C-methyl-D-erythritol 2,4-cyclodiphosphate (ME-2,4cPP) into 1-hydroxy-2-methyl-2-(E)-butenyl 4-diphosphate. The chain is 4-hydroxy-3-methylbut-2-en-1-yl diphosphate synthase (flavodoxin) from Nitrobacter hamburgensis (strain DSM 10229 / NCIMB 13809 / X14).